The following is a 179-amino-acid chain: Ribosome maturation factor RimM (179 aa).

The region spanning 100–176 (KEEFHLLELI…FIIINPPNGL (77 aa)) is the PRC barrel domain.

Belongs to the RimM family. As to quaternary structure, binds ribosomal protein uS19.

It localises to the cytoplasm. Functionally, an accessory protein needed during the final step in the assembly of 30S ribosomal subunit, possibly for assembly of the head region. Essential for efficient processing of 16S rRNA. May be needed both before and after RbfA during the maturation of 16S rRNA. It has affinity for free ribosomal 30S subunits but not for 70S ribosomes. The polypeptide is Ribosome maturation factor RimM (Prochlorococcus marinus (strain MIT 9215)).